Here is a 225-residue protein sequence, read N- to C-terminus: Rho GDP-dissociation inhibitor 3 (225 aa).

Belongs to the Rho GDI family. Primarily expressed in pancreas and brain.

It localises to the cytoplasm. Inhibits GDP/GTP exchange reaction of RhoB. Interacts specifically with the GDP- and GTP-bound forms of post-translationally processed Rhob and Rhog proteins, both of which show a growth-regulated expression in mammalian cells. Stimulates the release of the GDP-bound but not the GTP-bound RhoB protein. Also inhibits the GDP/GTP exchange of RhoB but shows less ability to inhibit the dissociation of prebound GTP. This Homo sapiens (Human) protein is Rho GDP-dissociation inhibitor 3 (ARHGDIG).